Consider the following 179-residue polypeptide: ATP synthase subunit delta (179 aa).

This sequence belongs to the ATPase delta chain family. As to quaternary structure, F-type ATPases have 2 components, F(1) - the catalytic core - and F(0) - the membrane proton channel. F(1) has five subunits: alpha(3), beta(3), gamma(1), delta(1), epsilon(1). F(0) has three main subunits: a(1), b(2) and c(10-14). The alpha and beta chains form an alternating ring which encloses part of the gamma chain. F(1) is attached to F(0) by a central stalk formed by the gamma and epsilon chains, while a peripheral stalk is formed by the delta and b chains.

Its subcellular location is the cell membrane. Functionally, f(1)F(0) ATP synthase produces ATP from ADP in the presence of a proton or sodium gradient. F-type ATPases consist of two structural domains, F(1) containing the extramembraneous catalytic core and F(0) containing the membrane proton channel, linked together by a central stalk and a peripheral stalk. During catalysis, ATP synthesis in the catalytic domain of F(1) is coupled via a rotary mechanism of the central stalk subunits to proton translocation. In terms of biological role, this protein is part of the stalk that links CF(0) to CF(1). It either transmits conformational changes from CF(0) to CF(1) or is implicated in proton conduction. This Listeria welshimeri serovar 6b (strain ATCC 35897 / DSM 20650 / CCUG 15529 / CIP 8149 / NCTC 11857 / SLCC 5334 / V8) protein is ATP synthase subunit delta.